A 388-amino-acid chain; its full sequence is MNIHEYQGKEILRKYGVTTPKGFPCFSVDEAVQAAEKLGGKVWVVKAQIHAGGRGKGGGVKVAKSLDEVRKYANDILGMTLVTHQTGPEGRLVKRLLIEEGADIKKELYVGMVVDRGSQRVALMASSEGGMDIEHVAEHTPEKIHKVFIDPFKGLLDSEADDIARKIGVPEGSIPQARAFMQGLYKAFDETDASLAEINPLIVTGDDRIVALDAKFNFDSNALYRHPEIVEMRDLDEEDPAEIEASKFDLTYISLDGNIGCLVNGAGLAMATMDVIKLYGGSPANFLDVGGGATTEKVTEAFKIMLKNPDIKAILVNIFGGIMKCDVIAQGVIAAAKQVDLTVPLVVRMAGTNEELGKKILAESGLPIITANNMAEAAEKVVNAAQGK.

The ATP-grasp domain occupies 9–244 (KEILRKYGVT…LDEEDPAEIE (236 aa)). ATP contacts are provided by residues lysine 46, 53–55 (GRG), glutamate 99, alanine 102, and glutamate 107. Mg(2+)-binding residues include asparagine 199 and aspartate 213. Substrate is bound by residues asparagine 264 and 321–323 (GIM).

It belongs to the succinate/malate CoA ligase beta subunit family. As to quaternary structure, heterotetramer of two alpha and two beta subunits. Requires Mg(2+) as cofactor.

The enzyme catalyses succinate + ATP + CoA = succinyl-CoA + ADP + phosphate. It carries out the reaction GTP + succinate + CoA = succinyl-CoA + GDP + phosphate. It functions in the pathway carbohydrate metabolism; tricarboxylic acid cycle; succinate from succinyl-CoA (ligase route): step 1/1. In terms of biological role, succinyl-CoA synthetase functions in the citric acid cycle (TCA), coupling the hydrolysis of succinyl-CoA to the synthesis of either ATP or GTP and thus represents the only step of substrate-level phosphorylation in the TCA. The beta subunit provides nucleotide specificity of the enzyme and binds the substrate succinate, while the binding sites for coenzyme A and phosphate are found in the alpha subunit. The protein is Succinate--CoA ligase [ADP-forming] subunit beta of Herminiimonas arsenicoxydans.